The primary structure comprises 471 residues: Anthranilate 1,2-dioxygenase large subunit (471 aa).

The Rieske domain occupies I52–V160. The [2Fe-2S] cluster site is built by C93, H95, C113, and H116. The Fe cation site is built by H220, H225, and D379.

Belongs to the bacterial ring-hydroxylating dioxygenase alpha subunit family. As to quaternary structure, the anthranilate dioxygenase (AntDO) multicomponent enzyme system is composed of an oxygenase component and a NADH:acceptor reductase component (AntC). The oxygenase component is a heterohexamer of 3 large (AntA) and 3 small (AntB) subunits. The cofactor is Fe cation. [2Fe-2S] cluster is required as a cofactor.

It carries out the reaction anthranilate + NADH + O2 + 3 H(+) = catechol + NH4(+) + CO2 + NAD(+). The enzyme catalyses anthranilate + NADPH + O2 + 3 H(+) = catechol + NH4(+) + CO2 + NADP(+). It functions in the pathway aromatic compound metabolism; anthranilate degradation via hydroxylation; catechol from anthranilate: step 1/1. In terms of biological role, component of anthranilate dioxygenase multicomponent enzyme system which catalyzes the incorporation of both atoms of molecular oxygen into anthranilate to form catechol. The sequence is that of Anthranilate 1,2-dioxygenase large subunit from Acinetobacter baylyi (strain ATCC 33305 / BD413 / ADP1).